A 385-amino-acid chain; its full sequence is Probable tRNA sulfurtransferase (385 aa).

Residues 65-165 form the THUMP domain; sequence AILQELFSFL…KEHFLVFTER (101 aa). Residues 183 to 184, 208 to 209, Arg-267, Gly-285, and Gln-294 each bind ATP; these read LL and TF.

It belongs to the ThiI family.

The protein resides in the cytoplasm. It carries out the reaction [ThiI sulfur-carrier protein]-S-sulfanyl-L-cysteine + a uridine in tRNA + 2 reduced [2Fe-2S]-[ferredoxin] + ATP + H(+) = [ThiI sulfur-carrier protein]-L-cysteine + a 4-thiouridine in tRNA + 2 oxidized [2Fe-2S]-[ferredoxin] + AMP + diphosphate. It catalyses the reaction [ThiS sulfur-carrier protein]-C-terminal Gly-Gly-AMP + S-sulfanyl-L-cysteinyl-[cysteine desulfurase] + AH2 = [ThiS sulfur-carrier protein]-C-terminal-Gly-aminoethanethioate + L-cysteinyl-[cysteine desulfurase] + A + AMP + 2 H(+). Its pathway is cofactor biosynthesis; thiamine diphosphate biosynthesis. In terms of biological role, catalyzes the ATP-dependent transfer of a sulfur to tRNA to produce 4-thiouridine in position 8 of tRNAs, which functions as a near-UV photosensor. Also catalyzes the transfer of sulfur to the sulfur carrier protein ThiS, forming ThiS-thiocarboxylate. This is a step in the synthesis of thiazole, in the thiamine biosynthesis pathway. The sulfur is donated as persulfide by IscS. This is Probable tRNA sulfurtransferase from Mycoplasma genitalium (strain ATCC 33530 / DSM 19775 / NCTC 10195 / G37) (Mycoplasmoides genitalium).